A 342-amino-acid polypeptide reads, in one-letter code: Glucokinase (342 aa).

Gly-18 to Thr-23 is a binding site for ATP.

The protein belongs to the bacterial glucokinase family.

The protein resides in the cytoplasm. It carries out the reaction D-glucose + ATP = D-glucose 6-phosphate + ADP + H(+). This Chelativorans sp. (strain BNC1) protein is Glucokinase.